We begin with the raw amino-acid sequence, 200 residues long: Recombination protein RecR (200 aa).

The C4-type zinc-finger motif lies at 59-74; that stretch reads CDICGNVCETSPCPVC. Residues 82–177 enclose the Toprim domain; that stretch reads SVICVVEEPK…KVTRLASGLP (96 aa).

The protein belongs to the RecR family.

May play a role in DNA repair. It seems to be involved in an RecBC-independent recombinational process of DNA repair. It may act with RecF and RecO. In Bifidobacterium adolescentis (strain ATCC 15703 / DSM 20083 / NCTC 11814 / E194a), this protein is Recombination protein RecR.